Here is a 560-residue protein sequence, read N- to C-terminus: MFS siderochrome iron transporter 1 (560 aa).

N-linked (GlcNAc...) asparagine glycosylation occurs at Asn-29. 11 consecutive transmembrane segments (helical) span residues 53–73 (LWLT…LVSV), 90–110 (LLAS…LTLA), 115–135 (VWGR…ALIM), 146–166 (VAAH…VDVM), 177–194 (MIMF…TFAG), 211–231 (FGAF…IMLF), 264–284 (VVGI…FSIV), 291–311 (WATG…AIFL), 331–351 (PTII…LLTI), 354–374 (AGYV…GIGL), and 379–399 (FKWA…LLIP). Asn-404 carries N-linked (GlcNAc...) asparagine glycosylation. Transmembrane regions (helical) follow at residues 407–427 (IGAV…FSVC), 441–461 (VAVV…VGLA), and 522–542 (VIAG…WRNV).

The protein belongs to the major facilitator superfamily.

The protein resides in the membrane. Functionally, major facilitator transporter involved in siderophore transport. In Ajellomyces capsulatus (Darling's disease fungus), this protein is MFS siderochrome iron transporter 1.